The sequence spans 352 residues: Anthranilate phosphoribosyltransferase (352 aa).

5-phospho-alpha-D-ribose 1-diphosphate-binding positions include G94, 97–98 (GS), S102, 104–107 (NIST), 122–130 (KHGNRAVSS), and S134. G94 contributes to the anthranilate binding site. S106 is a Mg(2+) binding site. Residue N125 coordinates anthranilate. Position 180 (R180) interacts with anthranilate. The Mg(2+) site is built by D239 and E240.

Belongs to the anthranilate phosphoribosyltransferase family. Homodimer. Requires Mg(2+) as cofactor.

The enzyme catalyses N-(5-phospho-beta-D-ribosyl)anthranilate + diphosphate = 5-phospho-alpha-D-ribose 1-diphosphate + anthranilate. It functions in the pathway amino-acid biosynthesis; L-tryptophan biosynthesis; L-tryptophan from chorismate: step 2/5. Its function is as follows. Catalyzes the transfer of the phosphoribosyl group of 5-phosphorylribose-1-pyrophosphate (PRPP) to anthranilate to yield N-(5'-phosphoribosyl)-anthranilate (PRA). This chain is Anthranilate phosphoribosyltransferase, found in Geobacter sp. (strain M21).